The sequence spans 227 residues: Albumin-2 (227 aa).

Hemopexin repeat units follow at residues 3-46 (PGYI…GPTP), 61-111 (SYGI…FPFF), 117-165 (ESGI…YPCF), and 171-221 (ESGA…WPSL). Positions 7 and 65 each coordinate Ca(2+). S118 serves as a coordination point for spermine. Positions 121 and 175 each coordinate Ca(2+).

Monomer and homodimer. Dimers are prevalent in solution.

It is found in the cytoplasm. The protein localises to the cytosol. In terms of biological role, may play a role in response to oxidative stress and polyamine biosynthesis. The monomeric form binds one hemin per monomer. In the dimeric form, about half of the dimers bind one molecule of spermine each under physiological conditions. Ligand binding is mutually exclusive as binding of hemin leads to dissociation of the dimer. This chain is Albumin-2, found in Lathyrus sativus (White vetchling).